Here is a 538-residue protein sequence, read N- to C-terminus: Chaperonin GroEL (538 aa).

Residues 29–32 (TLGP), 86–90 (DGTTT), Gly-413, 479–481 (DAL), and Asp-495 each bind ATP.

It belongs to the chaperonin (HSP60) family. In terms of assembly, forms a cylinder of 14 subunits composed of two heptameric rings stacked back-to-back. Interacts with the co-chaperonin GroES.

It is found in the cytoplasm. The catalysed reaction is ATP + H2O + a folded polypeptide = ADP + phosphate + an unfolded polypeptide.. Together with its co-chaperonin GroES, plays an essential role in assisting protein folding. The GroEL-GroES system forms a nano-cage that allows encapsulation of the non-native substrate proteins and provides a physical environment optimized to promote and accelerate protein folding. The protein is Chaperonin GroEL of Thermotoga maritima (strain ATCC 43589 / DSM 3109 / JCM 10099 / NBRC 100826 / MSB8).